The sequence spans 172 residues: Macro domain-containing protein CT2219 (172 aa).

Residues 1 to 172 (MPDNVLIHAI…DVYQKALAAG (172 aa)) form the Macro domain.

This sequence belongs to the MacroD-type family.

This is Macro domain-containing protein CT2219 from Chlorobaculum tepidum (strain ATCC 49652 / DSM 12025 / NBRC 103806 / TLS) (Chlorobium tepidum).